Consider the following 173-residue polypeptide: dCTP deaminase, dUMP-forming (173 aa).

Residues 93 to 98 (RSSIGR), Asp111, 119 to 121 (TLE), Gln138, and Tyr151 each bind dCTP. Catalysis depends on Glu121, which acts as the Proton donor/acceptor.

It belongs to the dCTP deaminase family. As to quaternary structure, homotrimer.

The enzyme catalyses dCTP + 2 H2O = dUMP + NH4(+) + diphosphate. Its pathway is pyrimidine metabolism; dUMP biosynthesis; dUMP from dCTP: step 1/1. In terms of biological role, bifunctional enzyme that catalyzes both the deamination of dCTP to dUTP and the hydrolysis of dUTP to dUMP without releasing the toxic dUTP intermediate. The polypeptide is dCTP deaminase, dUMP-forming (Clostridium acetobutylicum (strain ATCC 824 / DSM 792 / JCM 1419 / IAM 19013 / LMG 5710 / NBRC 13948 / NRRL B-527 / VKM B-1787 / 2291 / W)).